Consider the following 105-residue polypeptide: UPF0235 protein RP839 (105 aa).

This sequence belongs to the UPF0235 family.

The protein is UPF0235 protein RP839 of Rickettsia prowazekii (strain Madrid E).